The following is a 236-amino-acid chain: Ribose-5-phosphate isomerase A (236 aa).

Substrate is bound by residues threonine 28 to threonine 31, aspartate 83 to aspartate 86, and lysine 96 to glycine 99. Glutamate 105 serves as the catalytic Proton acceptor. Position 123 (lysine 123) interacts with substrate.

This sequence belongs to the ribose 5-phosphate isomerase family. As to quaternary structure, homodimer.

The catalysed reaction is aldehydo-D-ribose 5-phosphate = D-ribulose 5-phosphate. Its pathway is carbohydrate degradation; pentose phosphate pathway; D-ribose 5-phosphate from D-ribulose 5-phosphate (non-oxidative stage): step 1/1. Functionally, catalyzes the reversible conversion of ribose-5-phosphate to ribulose 5-phosphate. The polypeptide is Ribose-5-phosphate isomerase A (Methylorubrum populi (strain ATCC BAA-705 / NCIMB 13946 / BJ001) (Methylobacterium populi)).